Consider the following 656-residue polypeptide: ATP-dependent zinc metalloprotease FtsH (656 aa).

Over M1–T45 the chain is Cytoplasmic. Residues G46–A66 traverse the membrane as a helical segment. The Lumenal portion of the chain corresponds to Q67–A147. A helical transmembrane segment spans residues V148–L168. Residues R169–Q656 lie on the Cytoplasmic side of the membrane. G239–T246 lines the ATP pocket. H460 is a Zn(2+) binding site. Residue E461 is part of the active site. Zn(2+) is bound by residues H464 and D538.

The protein in the central section; belongs to the AAA ATPase family. It in the C-terminal section; belongs to the peptidase M41 family. As to quaternary structure, homohexamer. Zn(2+) is required as a cofactor.

The protein localises to the cellular thylakoid membrane. Functionally, acts as a processive, ATP-dependent zinc metallopeptidase for both cytoplasmic and membrane proteins. Plays a role in the quality control of integral membrane proteins. The chain is ATP-dependent zinc metalloprotease FtsH from Nostoc sp. (strain PCC 7120 / SAG 25.82 / UTEX 2576).